Consider the following 372-residue polypeptide: DNA replication and repair protein RecF (372 aa).

30 to 37 contributes to the ATP binding site; sequence GDNGQGKT.

Belongs to the RecF family.

Its subcellular location is the cytoplasm. Its function is as follows. The RecF protein is involved in DNA metabolism; it is required for DNA replication and normal SOS inducibility. RecF binds preferentially to single-stranded, linear DNA. It also seems to bind ATP. This Ruminiclostridium cellulolyticum (strain ATCC 35319 / DSM 5812 / JCM 6584 / H10) (Clostridium cellulolyticum) protein is DNA replication and repair protein RecF.